We begin with the raw amino-acid sequence, 421 residues long: CinA-like protein (421 aa).

Belongs to the CinA family.

The sequence is that of CinA-like protein from Mycobacterium sp. (strain JLS).